The chain runs to 735 residues: Photosystem I P700 chlorophyll a apoprotein A2 (735 aa).

Transmembrane regions (helical) follow at residues 46 to 69 (IFAS…FHVA), 135 to 158 (LYTG…LHLQ), 175 to 199 (LNHH…HVAI), 274 to 292 (IAHH…GHMY), 331 to 354 (IHFQ…QHMY), 370 to 396 (AALY…IFFI), 418 to 440 (AIIS…PYVH), and 518 to 536 (FLVH…LILV). 2 residues coordinate [4Fe-4S] cluster: C560 and C569. 2 consecutive transmembrane segments (helical) span residues 576 to 597 (AFYL…YWHW) and 644 to 666 (LSVW…MFLI). Positions 655, 663, and 671 each coordinate chlorophyll a. W672 is a phylloquinone binding site. A helical membrane pass occupies residues 708 to 728 (LVGLAHFSVGYIFTYAAFLIA).

This sequence belongs to the PsaA/PsaB family. In terms of assembly, the PsaA/B heterodimer binds the P700 chlorophyll special pair and subsequent electron acceptors. PSI consists of a core antenna complex that captures photons, and an electron transfer chain that converts photonic excitation into a charge separation. The eukaryotic PSI reaction center is composed of at least 11 subunits. P700 is a chlorophyll a/chlorophyll a' dimer, A0 is one or more chlorophyll a, A1 is one or both phylloquinones and FX is a shared 4Fe-4S iron-sulfur center. is required as a cofactor.

Its subcellular location is the plastid. The protein localises to the chloroplast thylakoid membrane. The catalysed reaction is reduced [plastocyanin] + hnu + oxidized [2Fe-2S]-[ferredoxin] = oxidized [plastocyanin] + reduced [2Fe-2S]-[ferredoxin]. In terms of biological role, psaA and PsaB bind P700, the primary electron donor of photosystem I (PSI), as well as the electron acceptors A0, A1 and FX. PSI is a plastocyanin-ferredoxin oxidoreductase, converting photonic excitation into a charge separation, which transfers an electron from the donor P700 chlorophyll pair to the spectroscopically characterized acceptors A0, A1, FX, FA and FB in turn. Oxidized P700 is reduced on the lumenal side of the thylakoid membrane by plastocyanin. This is Photosystem I P700 chlorophyll a apoprotein A2 from Zea mays (Maize).